A 91-amino-acid chain; its full sequence is MSVENSQIREPPPLPPVLLEVWPVIAVGALAWLVAAVAAFVVPGLASWRPVTVAGLATGLLGTTIFVWQLAAARRGARGAQAGLETYLDPK.

The next 2 membrane-spanning stretches (helical) occupy residues 22 to 42 (WPVI…AFVV) and 53 to 73 (VAGL…LAAA).

Its subcellular location is the cell membrane. This is an uncharacterized protein from Mycobacterium bovis (strain ATCC BAA-935 / AF2122/97).